The following is a 251-amino-acid chain: MILYEYPFNERIRTLLRLEDLFERFAFFLAQEDPREHHVALTTLFEIAEVTGRADLKSDLMKELERQRQTLAPFRGNPGIEQNALEAVLGEIEQTLANLAQMQGKTGQHLVDNEWLASIRSRAVIPGGTCKFDLPSYYAWQQWPAEQRRQDIAKWILPMLPLRDAVTIVLRLARESGQASKVMAMQGSYQQMLSGRTYQLMQVRVPPELRVIPEASANKYMLWVRFTVQDGDVRPRAVDIDVPFHLTLCNL.

It belongs to the ZapD family. In terms of assembly, interacts with FtsZ.

The protein localises to the cytoplasm. Functionally, cell division factor that enhances FtsZ-ring assembly. Directly interacts with FtsZ and promotes bundling of FtsZ protofilaments, with a reduction in FtsZ GTPase activity. In Burkholderia lata (strain ATCC 17760 / DSM 23089 / LMG 22485 / NCIMB 9086 / R18194 / 383), this protein is Cell division protein ZapD.